A 264-amino-acid chain; its full sequence is Thymidylate synthase (264 aa).

Arginine 21 contacts dUMP. Residue histidine 51 coordinates (6R)-5,10-methylene-5,6,7,8-tetrahydrofolate. 126–127 (RR) lines the dUMP pocket. The active-site Nucleophile is the cysteine 146. Residues 166 to 169 (RSAD), asparagine 177, and 207 to 209 (HLY) contribute to the dUMP site. Aspartate 169 is a (6R)-5,10-methylene-5,6,7,8-tetrahydrofolate binding site. Alanine 263 serves as a coordination point for (6R)-5,10-methylene-5,6,7,8-tetrahydrofolate.

It belongs to the thymidylate synthase family. Bacterial-type ThyA subfamily. Homodimer.

The protein localises to the cytoplasm. The enzyme catalyses dUMP + (6R)-5,10-methylene-5,6,7,8-tetrahydrofolate = 7,8-dihydrofolate + dTMP. The protein operates within pyrimidine metabolism; dTTP biosynthesis. In terms of biological role, catalyzes the reductive methylation of 2'-deoxyuridine-5'-monophosphate (dUMP) to 2'-deoxythymidine-5'-monophosphate (dTMP) while utilizing 5,10-methylenetetrahydrofolate (mTHF) as the methyl donor and reductant in the reaction, yielding dihydrofolate (DHF) as a by-product. This enzymatic reaction provides an intracellular de novo source of dTMP, an essential precursor for DNA biosynthesis. The chain is Thymidylate synthase from Mesorhizobium japonicum (strain LMG 29417 / CECT 9101 / MAFF 303099) (Mesorhizobium loti (strain MAFF 303099)).